Consider the following 325-residue polypeptide: Lactonase drp35 (325 aa).

Ca(2+) contacts are provided by glutamate 46, threonine 108, glycine 110, aspartate 128, threonine 131, tyrosine 133, aspartate 136, asparagine 183, aspartate 234, and serine 235. The active-site Proton donor is aspartate 234.

Belongs to the SMP-30/CGR1 family. The cofactor is Ca(2+).

The protein localises to the cytoplasm. Its function is as follows. Exhibits lactonase activity. Acts in cells with perturbed membrane integrity and is possibly related to the membrane homeostasis. The polypeptide is Lactonase drp35 (drp35) (Staphylococcus epidermidis (strain ATCC 35984 / DSM 28319 / BCRC 17069 / CCUG 31568 / BM 3577 / RP62A)).